A 425-amino-acid polypeptide reads, in one-letter code: Queuine tRNA-ribosyltransferase accessory subunit 2 (425 aa).

The disordered stretch occupies residues 302–323 (QNGAQDLEKNSPEEDQEEEVVK). Zn(2+)-binding residues include cysteine 351, cysteine 353, cysteine 356, and histidine 382.

Belongs to the queuine tRNA-ribosyltransferase family. QTRT2 subfamily. Heterodimer of a catalytic subunit QTRT1 and an accessory subunit QTRT2. It depends on Zn(2+) as a cofactor.

The protein localises to the cytoplasm. It localises to the mitochondrion outer membrane. In terms of biological role, non-catalytic subunit of the queuine tRNA-ribosyltransferase (TGT) that catalyzes the base-exchange of a guanine (G) residue with queuine (Q) at position 34 (anticodon wobble position) in tRNAs with GU(N) anticodons (tRNA-Asp, -Asn, -His and -Tyr), resulting in the hypermodified nucleoside queuosine (7-(((4,5-cis-dihydroxy-2-cyclopenten-1-yl)amino)methyl)-7-deazaguanosine). The polypeptide is Queuine tRNA-ribosyltransferase accessory subunit 2 (Gallus gallus (Chicken)).